The primary structure comprises 140 residues: Putative pre-16S rRNA nuclease (140 aa).

It belongs to the YqgF nuclease family.

It localises to the cytoplasm. In terms of biological role, could be a nuclease involved in processing of the 5'-end of pre-16S rRNA. The chain is Putative pre-16S rRNA nuclease from Aeromonas hydrophila.